The sequence spans 523 residues: GMP synthase [glutamine-hydrolyzing] (523 aa).

A Glutamine amidotransferase type-1 domain is found at lysine 8–serine 205. Cysteine 85 (nucleophile) is an active-site residue. Catalysis depends on residues histidine 179 and glutamate 181. Residues tryptophan 206–arginine 398 form the GMPS ATP-PPase domain. An ATP-binding site is contributed by serine 233 to serine 239.

Homodimer.

It carries out the reaction XMP + L-glutamine + ATP + H2O = GMP + L-glutamate + AMP + diphosphate + 2 H(+). Its pathway is purine metabolism; GMP biosynthesis; GMP from XMP (L-Gln route): step 1/1. Its function is as follows. Catalyzes the synthesis of GMP from XMP. The protein is GMP synthase [glutamine-hydrolyzing] of Haemophilus ducreyi (strain 35000HP / ATCC 700724).